Consider the following 160-residue polypeptide: MAGESTNSVGNDITSLIQPGLDQVIQDEGVQVTLINSILGWCRIHIINPVKSSKIVKSRAFQITMIVLGIILLIAGLALTFVLQGQLGNNAFLFLIPAVIGLVKLLATSVFMEKPCTPEKWRLCKRLLATTEDILDDGQINQSNTIFTMDSSESTNAAAS.

2 helical membrane-spanning segments follow: residues 63 to 83 and 92 to 112; these read ITMIVLGIILLIAGLALTFVL and FLFLIPAVIGLVKLLATSVFM.

Its subcellular location is the membrane. The protein is Sulfur-rich protein (srp) of Chlamydia abortus (strain DSM 27085 / S26/3) (Chlamydophila abortus).